The chain runs to 179 residues: Ribosomal RNA small subunit methyltransferase G (179 aa).

S-adenosyl-L-methionine contacts are provided by residues glycine 54, phenylalanine 59, 105–106 (IE), and arginine 121.

It belongs to the methyltransferase superfamily. RNA methyltransferase RsmG family.

It is found in the cytoplasm. The enzyme catalyses guanosine(527) in 16S rRNA + S-adenosyl-L-methionine = N(7)-methylguanosine(527) in 16S rRNA + S-adenosyl-L-homocysteine. Its function is as follows. Specifically methylates the N7 position of guanine in position 527 of 16S rRNA. This chain is Ribosomal RNA small subunit methyltransferase G, found in Helicobacter bizzozeronii.